A 350-amino-acid polypeptide reads, in one-letter code: C-X-C chemokine receptor type 1 (350 aa).

Over 1–39 (MSNITDPQMWDFDDLNFTGMPPADEDYSPCMLETETLNK) the chain is Extracellular. N-linked (GlcNAc...) asparagine glycosylation is found at Asn3 and Asn16. The helical transmembrane segment at 40-66 (YVVIIAYALVFLLSLLGNSLVMLVILY) threads the bilayer. Topologically, residues 67–75 (SRVGRSVTD) are cytoplasmic. Residues 76–96 (VYLLNLALADLLFALTLPIWA) traverse the membrane as a helical segment. Residues 97–111 (ASKVNGWIFGTFLCK) are Extracellular-facing. A disulfide bridge links Cys110 with Cys187. The chain crosses the membrane as a helical span at residues 112-133 (VVSLLKEVNFYSGILLLACISV). At 134 to 154 (DRYLAIVHATRTLTQKRHLVK) the chain is on the cytoplasmic side. A helical membrane pass occupies residues 155–174 (FVCLGCWGLSMNLSLPFFLF). Residues 175-199 (RQAYHPNNSSPVCYEVLGNDTAKWR) are Extracellular-facing. The helical transmembrane segment at 200–220 (MVLRILPHTFGFIVPLFVMLF) threads the bilayer. The Cytoplasmic segment spans residues 221-242 (CYGFTLRTLFKAHMGQKHRAMR). A helical membrane pass occupies residues 243–264 (VIFAVVLIFLLCWLPYNLVLLA). Topologically, residues 265–285 (DTLMRTQVIQESCERRNNIGR) are extracellular. Residues 286–308 (ALDATEILGFLHSCLNPIIYAFI) form a helical membrane-spanning segment. Topologically, residues 309–350 (GQNFRHGFLKILAMHGLVSKEFLARHRVTSYTSSSVNVSSNL) are cytoplasmic.

The protein belongs to the G-protein coupled receptor 1 family. Interacts with IL8. Interacts with GNAI2.

The protein resides in the cell membrane. In terms of biological role, receptor to interleukin-8, which is a powerful neutrophils chemotactic factor. Binding of IL-8 to the receptor causes activation of neutrophils. This response is mediated via a G-protein that activates a phosphatidylinositol-calcium second messenger system. This Homo sapiens (Human) protein is C-X-C chemokine receptor type 1 (CXCR1).